The primary structure comprises 505 residues: Catalase (505 aa).

Residues His-56 and Asn-129 contribute to the active site. Tyr-339 contributes to the heme binding site.

Belongs to the catalase family. Heme is required as a cofactor.

The protein localises to the cytoplasm. It carries out the reaction 2 H2O2 = O2 + 2 H2O. Functionally, decomposes hydrogen peroxide into water and oxygen; serves to protect cells from the toxic effects of hydrogen peroxide. This Helicobacter pylori (strain J99 / ATCC 700824) (Campylobacter pylori J99) protein is Catalase (katA).